The primary structure comprises 340 residues: Delta(1)-pyrroline-2-carboxylate reductase 1 (340 aa).

S50 functions as the Charge relay system in the catalytic mechanism. H51 acts as the Proton donor in catalysis. Residue R55 participates in substrate binding. Residue 123–127 coordinates NADP(+); it reads HFSAL. T163 provides a ligand contact to substrate. 181-183 provides a ligand contact to NADP(+); the sequence is DFA. 189-190 contacts substrate; the sequence is RG. D191 (charge relay system) is an active-site residue. NADP(+) contacts are provided by residues 232–233 and 307–313; these read HK and RLPSQRR.

This sequence belongs to the LDH2/MDH2 oxidoreductase family. Homodimer.

It catalyses the reaction L-proline + NAD(+) = 1-pyrroline-2-carboxylate + NADH + H(+). The enzyme catalyses L-proline + NADP(+) = 1-pyrroline-2-carboxylate + NADPH + H(+). Functionally, catalyzes the reduction of Delta(1)-pyrroline-2-carboxylate (Pyr2C) to L-proline, using NADPH as the electron donor. May be involved in a degradation pathway that converts trans-3-hydroxy-L-proline (t3LHyp) to L-proline. This Burkholderia ambifaria (strain ATCC BAA-244 / DSM 16087 / CCUG 44356 / LMG 19182 / AMMD) (Burkholderia cepacia (strain AMMD)) protein is Delta(1)-pyrroline-2-carboxylate reductase 1.